The chain runs to 355 residues: Tyrosine recombinase XerC (355 aa).

The Core-binding (CB) domain maps to 4 to 89 (TQFDGDIDSF…AVRGFFAWAY (86 aa)). The segment at 138 to 180 (DDGGAAAASGSGKAAGKTADKSADTVNRSEAPARADKRDNARV) is disordered. Low complexity predominate over residues 141 to 154 (GAAAASGSGKAAGK). The Tyr recombinase domain occupies 158–349 (KSADTVNRSE…SIEQLKNRYG (192 aa)). Positions 168 to 178 (APARADKRDNA) are enriched in basic and acidic residues. Residues R200, K224, H301, R304, and H327 contribute to the active site. The O-(3'-phospho-DNA)-tyrosine intermediate role is filled by Y336.

It belongs to the 'phage' integrase family. XerC subfamily. In terms of assembly, forms a cyclic heterotetrameric complex composed of two molecules of XerC and two molecules of XerD.

Its subcellular location is the cytoplasm. Site-specific tyrosine recombinase, which acts by catalyzing the cutting and rejoining of the recombining DNA molecules. The XerC-XerD complex is essential to convert dimers of the bacterial chromosome into monomers to permit their segregation at cell division. It also contributes to the segregational stability of plasmids. This chain is Tyrosine recombinase XerC, found in Bifidobacterium longum subsp. infantis (strain ATCC 15697 / DSM 20088 / JCM 1222 / NCTC 11817 / S12).